The chain runs to 858 residues: Leucine--tRNA ligase (858 aa).

The short motif at proline 42–histidine 52 is the 'HIGH' region element. Positions lysine 618–serine 622 match the 'KMSKS' region motif. Lysine 621 contributes to the ATP binding site.

This sequence belongs to the class-I aminoacyl-tRNA synthetase family.

Its subcellular location is the cytoplasm. The catalysed reaction is tRNA(Leu) + L-leucine + ATP = L-leucyl-tRNA(Leu) + AMP + diphosphate. This is Leucine--tRNA ligase from Vibrio cholerae serotype O1 (strain ATCC 39541 / Classical Ogawa 395 / O395).